Consider the following 192-residue polypeptide: NF-kappa-B inhibitor-interacting Ras-like protein 1 (192 aa).

Position 11-18 (11-18 (GLLSVGKT)) interacts with GTP. Positions 35-43 (DCETMEDVY) match the Effector region motif. An interactions with NFKBIA and NFKBIB region spans residues 58 to 93 (HLYDTRGLQEGVELPKHYFSFADGFVLVYSVNNLES). GTP-binding positions include 61–65 (DTRGL) and 120–123 (NKID). The tract at residues 168 to 192 (LSQPQSKSSFPLPGRKNKGNSSSEN) is disordered.

It belongs to the small GTPase superfamily. Ras family. KappaB-Ras subfamily. Interacts with both NF-kappa-B inhibitor alpha (NFKBIA) and beta (NFKBIB) in vitro. However, it probably only interacts with NFKBIB in vivo. Forms a complex with NFKBIB and NF-kappa-B heterodimer (p50/NFKB1 and p65/RELA). Also interacts with c-Rel (REL).

Its subcellular location is the cytoplasm. Functionally, atypical Ras-like protein that acts as a potent regulator of NF-kappa-B activity by preventing the degradation of NF-kappa-B inhibitor beta (NFKBIB) by most signals, explaining why NFKBIB is more resistant to degradation. May act by blocking phosphorylation of NFKBIB and mediating cytoplasmic retention of p65/RELA NF-kappa-B subunit. It is unclear whether it acts as a GTPase. Both GTP- and GDP-bound forms block phosphorylation of NFKBIB. The sequence is that of NF-kappa-B inhibitor-interacting Ras-like protein 1 (NKIRAS1) from Macaca fascicularis (Crab-eating macaque).